A 395-amino-acid chain; its full sequence is Putative gustatory receptor 93b (395 aa).

Topologically, residues 1-18 (MSGLLVMPRILRCLNVSR) are cytoplasmic. A helical membrane pass occupies residues 19–39 (ISAILLRSCFLYGTFFGVITF). At 40–89 (RIERKDSQLVAINRRGYLWICLVIRLLASCFYGYSYDAWSGQYEDMYLRA) the chain is on the extracellular side. A helical transmembrane segment spans residues 90–110 (FFGFRLIGCLICSVIILVMQF). Topologically, residues 111-153 (WFGEELINLVNRFLQLFRRMQSLTNSPKNRFGDRAEFLLMFSK) are cytoplasmic. A helical membrane pass occupies residues 154–174 (VFSLLFVFMAFRLMLSPWFLL). The Extracellular segment spans residues 175–183 (TLVCDLYTS). Residues 184 to 204 (VGTGMITHLCFVGYLSIGVLY) form a helical membrane-spanning segment. The Cytoplasmic portion of the chain corresponds to 205-267 (RDLNNYVDCQ…RSFQQLFDLP (63 aa)). Residues 268-288 (LFLSLAQSLLAMSMVSYHAIL) form a helical membrane-spanning segment. At 289 to 293 (RRQYS) the chain is on the extracellular side. The chain crosses the membrane as a helical span at residues 294–314 (FNLWGLVIKLLIDVVLLTMSV). Over 315-369 (HSAVNGSRLIRRLSFENFYVTDSQSYHQKLELFLGRLQHQELRVFPLGLFEVSNE) the chain is Cytoplasmic. The helical transmembrane segment at 370–390 (LTLFFLSAMVTYLVFLVQYGM) threads the bilayer. Over 391–395 (QSQQI) the chain is Extracellular.

It belongs to the insect chemoreceptor superfamily. Gustatory receptor (GR) family. Gr93a subfamily. In larvae, is expressed in neurons of the terminal external chemosensory organ and of the dorsal pharyngeal sense organ.

The protein localises to the cell membrane. Functionally, probable gustatory receptor which mediates acceptance or avoidance behavior, depending on its substrates. This chain is Putative gustatory receptor 93b (Gr93b), found in Drosophila melanogaster (Fruit fly).